Here is a 365-residue protein sequence, read N- to C-terminus: Putative F-box protein At1g31000 (365 aa).

The F-box domain occupies asparagine 15–phenylalanine 62.

In Arabidopsis thaliana (Mouse-ear cress), this protein is Putative F-box protein At1g31000.